The chain runs to 121 residues: Large ribosomal subunit protein bL21 (121 aa).

It belongs to the bacterial ribosomal protein bL21 family. Part of the 50S ribosomal subunit. Contacts protein L20.

In terms of biological role, this protein binds to 23S rRNA in the presence of protein L20. The sequence is that of Large ribosomal subunit protein bL21 from Gloeobacter violaceus (strain ATCC 29082 / PCC 7421).